The chain runs to 283 residues: Elongation factor Ts (283 aa).

Residues 80 to 83 (TDFV) are involved in Mg(2+) ion dislocation from EF-Tu.

The protein belongs to the EF-Ts family.

Its subcellular location is the cytoplasm. Its function is as follows. Associates with the EF-Tu.GDP complex and induces the exchange of GDP to GTP. It remains bound to the aminoacyl-tRNA.EF-Tu.GTP complex up to the GTP hydrolysis stage on the ribosome. This Actinobacillus succinogenes (strain ATCC 55618 / DSM 22257 / CCUG 43843 / 130Z) protein is Elongation factor Ts.